Here is a 327-residue protein sequence, read N- to C-terminus: Aquaporin-1 (327 aa).

Residues 1–34 (MSSNDSNDTDKQHTRLDPTGVDDAYIPPEQPETK) form a disordered region. Over 1 to 48 (MSSNDSNDTDKQHTRLDPTGVDDAYIPPEQPETKHHRFKISRDTLRNH) the chain is Cytoplasmic. Residues 49-69 (FIAAVGEFCGTFMFLWCAYVI) form a helical membrane-spanning segment. At 70 to 91 (CNVANHDVALVAAPDGSHPGQL) the chain is on the extracellular side. A helical membrane pass occupies residues 92 to 112 (IMIAIGFGFSVMFSIWCFAGV). The Cytoplasmic portion of the chain corresponds to 113-136 (SGGALNPAVSLSLCLARAVSPTRC). Residues 118–120 (NPA) carry the NPA 1 motif. The chain crosses the membrane as a helical span at residues 137–157 (VVMWVSQIVAGMAAGGAASAM). Over 158–176 (TPGEVLFANSLGLGCSRTR) the chain is Extracellular. The chain crosses the membrane as a helical span at residues 177-197 (GLFLEMFGTAILCLTVLMTAV). Over 198-203 (EKRETN) the chain is Cytoplasmic. The helical transmembrane segment at 204 to 224 (FMAALPIGISLFIAHVALTAY) threads the bilayer. Topologically, residues 225-248 (TGTGVNPARSLGAAVAARYFPHYH) are extracellular. The NPA 2 motif lies at 230 to 232 (NPA). Residues 249–269 (WIYWIGPLLGSILAWSVWQLL) form a helical membrane-spanning segment. Residues 270–327 (QILDYTTYVTAEKAASTKEKAQKKVKPAVPLLWLKSNFPLLFFISRSLALNVIIFGKN) are Cytoplasmic-facing.

It belongs to the MIP/aquaporin (TC 1.A.8) family.

It is found in the endoplasmic reticulum membrane. It localises to the cell membrane. Functionally, water channel required to facilitate the transport of water across membranes. Involved in sporulation, freeze tolerance and osmotolerance. Is non-functional in most laboratory strains. The chain is Aquaporin-1 (AQY1) from Saccharomyces cerevisiae (Baker's yeast).